The sequence spans 386 residues: Bifunctional desaturase/conjugase FADX (386 aa).

The segment at 1 to 28 (MGAGGRMSVAPNNSKCEKKESRSVKRVP) is disordered. The next 2 helical transmembrane spans lie at 65-85 (LSFI…SPIT) and 87-107 (IAWP…WVLG). Positions 108–112 (HECGH) match the Histidine box-1 motif. The Histidine box-2 motif lies at 144–148 (HRRHH). Helical transmembrane passes span 182-202 (ALTL…FNVS), 228-248 (IYIS…IAMA), and 250-270 (GLAW…ALVV). The short motif at 318 to 322 (HVIHH) is the Histidine box-3 element.

Belongs to the fatty acid desaturase type 1 family. As to expression, expressed exclusively in developing seeds.

It is found in the endoplasmic reticulum membrane. It carries out the reaction a (9Z,12Z)-octadecadienoyl-containing glycerolipid + 2 Fe(II)-[cytochrome b5] + O2 + 2 H(+) = a (9Z,11E,13E)-octadecatrienoyl-containing glycerolipid + 2 Fe(III)-[cytochrome b5] + 2 H2O. It catalyses the reaction (9Z,12Z,15Z)-octadecatrienoyl-containing glycerolipid + 2 Fe(II)-[cytochrome b5] + O2 + 2 H(+) = a (9Z,11E,13E,15Z)-octadecatetraenoyl-containing glycerolipid + 2 Fe(III)-[cytochrome b5] + 2 H2O. The catalysed reaction is a (9Z)-octadecenoyl-containing glycerolipid + 2 Fe(II)-[cytochrome b5] + O2 + 2 H(+) = a (9Z,12E)-octadecadienoyl-containing glycerolipid + 2 Fe(III)-[cytochrome b5] + 2 H2O. The enzyme catalyses a (9Z)-hexadecenoyl-containing glycerolipid + 2 Fe(II)-[cytochrome b5] + O2 + 2 H(+) = a (9Z,12E)-hexadecadienoyl-containing glycerolipid + 2 Fe(III)-[cytochrome b5] + 2 H2O. The protein operates within lipid metabolism; polyunsaturated fatty acid biosynthesis. Its function is as follows. Converts linoleic acid to alpha-eleostearic acid (18:3(9Z,11E,13E)) and alpha-linolenic acid to alpha-parinaric acid (18:4(9Z,11E,13E,15Z)). Converts a single cis double bond at carbon 12 to two conjugated trans bonds at positions 11 and 13. Can also act as a 12(E) desaturase when acting on the monounsaturated fatty acids oleate and palmitoleate, stereoselectively introducing a trans double bond. The polypeptide is Bifunctional desaturase/conjugase FADX (Vernicia fordii (Tung)).